The chain runs to 852 residues: Carbohydrate-responsive element-binding protein (852 aa).

A compositionally biased stretch (low complexity) spans 1–12; sequence MAGALAGLAAGL. Disordered regions lie at residues 1-36 and 54-80; these read MAGA…SLRR and VSSP…FGPR. Phosphoserine occurs at positions 20, 23, and 25. At T27 the chain carries Phosphothreonine. The residue at position 29 (S29) is a Phosphoserine. S196 bears the Phosphoserine mark. 3 disordered regions span residues 328 to 365, 486 to 527, and 548 to 648; these read DSLF…CPGP, PCFS…NNPC, and STLL…NKTE. Residues 505–521 show a composition bias toward low complexity; it reads ASPPTLAPATASPPTTA. A compositionally biased stretch (polar residues) spans 548 to 559; the sequence is STLLRSPGSPQE. S556 is subject to Phosphoserine; by AMPK. A compositionally biased stretch (pro residues) spans 568–584; sequence FLPPTPAPTPPRPPPGP. S602, S614, and S631 each carry phosphoserine. The bHLH domain occupies 649–703; the sequence is NRRITHISAEQKRRFNIKLGFDTLHGLVSTLSAQPSLKVSKATTLQKTAEYILML. The tract at residues 703 to 724 is leucine-zipper; sequence LQQERAGLQEEAQQLRDEIEEL.

As to quaternary structure, binds DNA as a heterodimer with MLX/TCFL4. Phosphorylation at Ser-556 by AMPK inactivates the DNA-binding activity. Expressed in liver, heart, kidney, cerebellum and intestinal tissues.

The protein resides in the nucleus. Functionally, binds DNA as a heterodimer with MLX/TCFL4 and activates transcription. Binds to the canonical E box sequence 5'-CACGTG-3'. Plays a role in transcriptional activation of glycolytic target genes. Involved in glucose-responsive gene regulation. Regulates transcription in response to changes in cellular carbohydrate abundance such as occurs during fasting to feeding metabolic transition. Refeeding stimulates MLXIPL/ChREBP transcription factor, leading to increased BCKDK to PPM1K expression ratio, phosphorylation and activation of ACLY that ultimately results in the generation of malonyl-CoA and oxaloacetate immediate substrates of de novo lipogenesis and gluconeogenesis, respectively. This is Carbohydrate-responsive element-binding protein (MLXIPL) from Homo sapiens (Human).